The sequence spans 163 residues: Phosphopantetheine adenylyltransferase (163 aa).

Position 9 (Ser-9) interacts with substrate. ATP is bound by residues 9–10 (SF) and His-17. Substrate contacts are provided by Lys-41, Ile-75, and Arg-89. Residues 90 to 92 (GIR), Glu-100, and 125 to 131 (HLYVRSD) each bind ATP.

The protein belongs to the bacterial CoaD family. In terms of assembly, homohexamer. Mg(2+) serves as cofactor.

It is found in the cytoplasm. It carries out the reaction (R)-4'-phosphopantetheine + ATP + H(+) = 3'-dephospho-CoA + diphosphate. Its pathway is cofactor biosynthesis; coenzyme A biosynthesis; CoA from (R)-pantothenate: step 4/5. Its function is as follows. Reversibly transfers an adenylyl group from ATP to 4'-phosphopantetheine, yielding dephospho-CoA (dPCoA) and pyrophosphate. The protein is Phosphopantetheine adenylyltransferase of Borreliella burgdorferi (strain ZS7) (Borrelia burgdorferi).